Here is a 354-residue protein sequence, read N- to C-terminus: 3-dehydroquinate synthase (354 aa).

NAD(+) is bound by residues 106-110, 130-131, Lys143, and Lys152; these read GVIGD and TS. Zn(2+)-binding residues include Glu185, His246, and His262.

This sequence belongs to the sugar phosphate cyclases superfamily. Dehydroquinate synthase family. Requires Co(2+) as cofactor. Zn(2+) serves as cofactor. The cofactor is NAD(+).

The protein resides in the cytoplasm. It carries out the reaction 7-phospho-2-dehydro-3-deoxy-D-arabino-heptonate = 3-dehydroquinate + phosphate. It functions in the pathway metabolic intermediate biosynthesis; chorismate biosynthesis; chorismate from D-erythrose 4-phosphate and phosphoenolpyruvate: step 2/7. Its function is as follows. Catalyzes the conversion of 3-deoxy-D-arabino-heptulosonate 7-phosphate (DAHP) to dehydroquinate (DHQ). This chain is 3-dehydroquinate synthase, found in Leuconostoc mesenteroides subsp. mesenteroides (strain ATCC 8293 / DSM 20343 / BCRC 11652 / CCM 1803 / JCM 6124 / NCDO 523 / NBRC 100496 / NCIMB 8023 / NCTC 12954 / NRRL B-1118 / 37Y).